The chain runs to 184 residues: Photosystem I assembly protein Ycf4 (184 aa).

A run of 2 helical transmembrane segments spans residues 24–44 (WAFI…SSYI) and 57–77 (IIFF…LFIS).

Belongs to the Ycf4 family.

The protein localises to the plastid. The protein resides in the chloroplast thylakoid membrane. Its function is as follows. Seems to be required for the assembly of the photosystem I complex. This is Photosystem I assembly protein Ycf4 from Buxus microphylla (Littleleaf boxwood).